Reading from the N-terminus, the 624-residue chain is ADP,ATP carrier protein 1, chloroplastic (624 aa).

The N-terminal 79 residues, 1–79, are a transit peptide targeting the chloroplast; sequence MEAVIQTRGL…KERSTEFICK (79 aa). Ala-80 carries the N-acetylalanine modification. A run of 6 helical transmembrane segments spans residues 108 to 128, 182 to 202, 240 to 260, 315 to 335, 446 to 466, and 545 to 565; these read VEVATLKKIIPLGLMFFCILF, ALFYTVIVPFIIYFGAFGFVM, LFYVMAELWGSVVVSVLFWGF, AMMSIVVGMGLAICLLYWWVN, LLTGVAFFSLILFGGPFAPLV, and LANSTPYLGMILLVIVTAWLA. Residues 579–624 form a disordered region; that stretch reads SEEELEKEMERASSVKIPVVSQDESGNGSLGESPSSSPEKSAPTNL. Low complexity predominate over residues 602–624; it reads ESGNGSLGESPSSSPEKSAPTNL.

Belongs to the ADP/ATP translocase tlc (TC 2.A.12.2) family.

It is found in the plastid. The protein localises to the chloroplast membrane. Functionally, may function as an ATP importer. This Arabidopsis thaliana (Mouse-ear cress) protein is ADP,ATP carrier protein 1, chloroplastic (AATP1).